Here is a 145-residue protein sequence, read N- to C-terminus: uncharacterized protein (145 aa).

Disordered regions lie at residues Met1–Thr41 and Arg122–Leu145. Positions Gly20–Gln34 are enriched in polar residues. The segment covering Asp134 to Leu145 has biased composition (basic and acidic residues).

In terms of tissue distribution, ubiquitous.

This is an uncharacterized protein from Homo sapiens (Human).